The sequence spans 542 residues: L-ornithine N(5)-monooxygenase (542 aa).

FAD is bound by residues glutamate 45–histidine 53 and glutamine 64. Lysine 69 serves as a coordination point for substrate. Residue serine 218 to serine 221 coordinates NADP(+). Residues asparagine 263 to phenylalanine 266 and asparagine 294 each bind substrate. Asparagine 294–serine 296 serves as a coordination point for NADP(+). The tract at residues phenylalanine 443–proline 472 is disordered. A compositionally biased stretch (low complexity) spans serine 447–proline 472. Threonine 518 to leucine 520 is an FAD binding site. Substrate is bound at residue serine 521.

The protein belongs to the lysine N(6)-hydroxylase/L-ornithine N(5)-oxygenase family. As to quaternary structure, homotetramer. FAD serves as cofactor.

It carries out the reaction L-ornithine + NADPH + O2 = N(5)-hydroxy-L-ornithine + NADP(+) + H2O. It catalyses the reaction L-ornithine + NADH + O2 = N(5)-hydroxy-L-ornithine + NAD(+) + H2O. It participates in siderophore biosynthesis. Its function is as follows. L-ornithine N(5)-monooxygenase; part of the gene cluster that mediates the biosynthesis of coprinoferrin, an acylated tripeptide hydroxamate siderophore. The biosynthesis of coprinoferrin depends on the hydroxylation of ornithine to N(5)-hydroxyornithine, catalyzed by the monooxygenase cpf2. The second step, the acylation of N(5)-hydroxy-L-ornithine to yield N(5)-hexanoyl-N(5)-hydroxyl-L-ornithine is catalyzed by a not yet identified acyltransferase. Finally, assembly of coprinoferrin is catalyzed by the nonribosomal peptide synthase (NRPS) cpf1 via amide bond formation between three N(5)-hexanoyl-N(5)-hydroxyl-L-ornithine molecules to release the linear trimer. Interestingly, proteins seemingly not directly related to biosynthesis, such as transcription factors, replication factors, and autophagy-related proteins, are conserved among the clusters homologous to the coprinoferrin cluster, suggesting that the cluster may also play developmental and cell biological functions. The chain is L-ornithine N(5)-monooxygenase from Coprinopsis cinerea (strain Okayama-7 / 130 / ATCC MYA-4618 / FGSC 9003) (Inky cap fungus).